The following is a 917-amino-acid chain: ABC transporter A family member 12 (917 aa).

6 helical membrane passes run 34 to 54 (LILVPLFLCLILLAIQQVLDA), 323 to 343 (IASLLGPLFFTWVVLLLFPVI), 377 to 397 (FLTISMLYVISLVGFGSAIGL), 409 to 429 (FVFYFIYSNLQISLAFLVSSI), 435 to 455 (TVTVIAYILVYGTGLLGSFLF), and 508 to 528 (GEVFCIMSVEWFLALIVAYYI). In terms of domain architecture, ABC transporter spans 595-832 (ILCDNLKKVY…YGGSYVFTMT (238 aa)). 633–640 (GPNGAGKT) is an ATP binding site.

This sequence belongs to the ABC transporter superfamily. ABCA family. CPR flippase (TC 3.A.1.211) subfamily.

Its subcellular location is the membrane. The chain is ABC transporter A family member 12 (ABCA12) from Arabidopsis thaliana (Mouse-ear cress).